A 234-amino-acid polypeptide reads, in one-letter code: Large ribosomal subunit protein uL1 (234 aa).

The protein belongs to the universal ribosomal protein uL1 family. Part of the 50S ribosomal subunit.

In terms of biological role, binds directly to 23S rRNA. The L1 stalk is quite mobile in the ribosome, and is involved in E site tRNA release. Protein L1 is also a translational repressor protein, it controls the translation of the L11 operon by binding to its mRNA. The sequence is that of Large ribosomal subunit protein uL1 from Prochlorococcus marinus (strain SARG / CCMP1375 / SS120).